A 547-amino-acid chain; its full sequence is Isoflavonoid 7-O-beta-apiosyl-glucoside beta-glycosidase (547 aa).

An N-terminal signal peptide occupies residues 1-31; that stretch reads MHAMTFKAILLLGLLALVSTSASIAFAKEVR. Residue glutamine 59 coordinates a beta-D-glucoside. N-linked (GlcNAc...) asparagine glycans are attached at residues asparagine 72 and asparagine 132. Residue histidine 159 coordinates a beta-D-glucoside. The N-linked (GlcNAc...) asparagine glycan is linked to asparagine 175. 204 to 205 lines the a beta-D-glucoside pocket; the sequence is NE. Glutamate 205 serves as the catalytic Proton donor. Cysteine 224 and cysteine 232 are oxidised to a cystine. A glycan (N-linked (GlcNAc...) asparagine) is linked at asparagine 285. A beta-D-glucoside is bound by residues tyrosine 348, glutamate 419, tryptophan 468, 475 to 476, and phenylalanine 484; that span reads EW. The active-site Nucleophile is the glutamate 419. An N-linked (GlcNAc...) asparagine glycan is attached at asparagine 490.

The protein belongs to the glycosyl hydrolase 1 family. In terms of assembly, homotetramer.

It catalyses the reaction 7-[beta-D-apiofuranosyl-(1-&gt;6)-beta-D-glucopyranosyloxy]isoflavonoid + H2O = a 7-hydroxyisoflavonoid + beta-D-apiofuranosyl-(1-&gt;6)-D-glucose.. Its activity is regulated as follows. Not inhibited by iron, calcium, mercury, manganese, zinc or EDTA. Hydrolyzes dalpatein 7-O-beta-D-apiofuranosyl-(1-&gt;6)-beta-D-glucopyranoside and dalnigrein 7-O-beta-D-apiofuranosyl-(1-&gt;6)-beta-D-glucopyranoside. Also has activity towards pNP-beta-D-fucoside and pNP-beta-D-glucoside, but not pNP-beta-cellobioside. This Dalbergia nigrescens (Thai blackwood) protein is Isoflavonoid 7-O-beta-apiosyl-glucoside beta-glycosidase.